Here is a 515-residue protein sequence, read N- to C-terminus: Cytoplasmic tRNA 2-thiolation protein 2 (515 aa).

2 disordered regions span residues 1–24 (MCQV…RPSR) and 188–217 (LGAG…ARPP). Position 2 is an N-acetylcysteine (C2). Phosphoserine occurs at positions 415, 419, 435, and 508.

The protein belongs to the CTU2/NCS2 family. Component of a complex at least composed of URM1, CTU2/NCS2 and CTU1/ATPBD3.

It is found in the cytoplasm. Its pathway is tRNA modification; 5-methoxycarbonylmethyl-2-thiouridine-tRNA biosynthesis. Its function is as follows. Plays a central role in 2-thiolation of mcm(5)S(2)U at tRNA wobble positions of tRNA(Lys), tRNA(Glu) and tRNA(Gln). May act by forming a heterodimer with CTU1/ATPBD3 that ligates sulfur from thiocarboxylated URM1 onto the uridine of tRNAs at wobble position. The polypeptide is Cytoplasmic tRNA 2-thiolation protein 2 (Homo sapiens (Human)).